Reading from the N-terminus, the 386-residue chain is ADP,ATP carrier protein 1, mitochondrial (386 aa).

Residues 1 to 76 (MDQVQHPSVM…PSTASAICVQ (76 aa)) constitute a mitochondrion transit peptide. 3 Solcar repeats span residues 84-177 (SSFA…FKRL), 189-281 (KWFA…LKPV), and 289-375 (DSFF…LQLI). Transmembrane regions (helical) follow at residues 86–113 (FAIDFLMGGVSAAVSKTAAAPIERVKLL), 154–178 (TANVIRYFPTQALNFAFKDYFKRLF), 187–207 (YWKWFAGNLASGGAAGASSLL), 257–278 (FNISCVGIIVYRGLYFGMYDSL), and 292–312 (FASFVLGWLITNGAALASYPI). 2 residues coordinate ADP: R159 and K171. R316 is a binding site for ADP. The interval 316–321 (RRRMMM) is important for transport activity. The Nucleotide carrier signature motif signature appears at 316–321 (RRRMMM). Residues 352–372 (AGSNILRAIAGAGVLAGYDKL) traverse the membrane as a helical segment.

This sequence belongs to the mitochondrial carrier (TC 2.A.29) family. Monomer.

It is found in the mitochondrion inner membrane. The catalysed reaction is ADP(in) + ATP(out) = ADP(out) + ATP(in). Its activity is regulated as follows. The matrix-open state (m-state) is inhibited by the membrane-permeable bongkrekic acid (BKA). The cytoplasmic-open state (c-state) is inhibited by the membrane-impermeable toxic inhibitor carboxyatractyloside (CATR). In terms of biological role, ADP:ATP antiporter that mediates import of ADP into the mitochondrial matrix for ATP synthesis, and export of ATP out to fuel the cell. Cycles between the cytoplasmic-open state (c-state) and the matrix-open state (m-state): operates by the alternating access mechanism with a single substrate-binding site intermittently exposed to either the cytosolic (c-state) or matrix (m-state) side of the inner mitochondrial membrane. In Gossypium hirsutum (Upland cotton), this protein is ADP,ATP carrier protein 1, mitochondrial (ANT1).